Here is a 151-residue protein sequence, read N- to C-terminus: Cytochrome c-type biogenesis protein CcmE (151 aa).

Over 1-9 the chain is Cytoplasmic; the sequence is MKGLKKKRR. Residues 10–30 form a helical; Signal-anchor for type II membrane protein membrane-spanning segment; that stretch reads IQIITLAFVALAGSTALIGYA. The Periplasmic segment spans residues 31–151; sequence MRDGINFFRS…FQHTEDQPQG (121 aa). Heme-binding residues include histidine 123 and tyrosine 127.

It belongs to the CcmE/CycJ family.

The protein localises to the cell inner membrane. In terms of biological role, heme chaperone required for the biogenesis of c-type cytochromes. Transiently binds heme delivered by CcmC and transfers the heme to apo-cytochromes in a process facilitated by CcmF and CcmH. This is Cytochrome c-type biogenesis protein CcmE from Cereibacter sphaeroides (strain ATCC 17025 / ATH 2.4.3) (Rhodobacter sphaeroides).